We begin with the raw amino-acid sequence, 370 residues long: Integrin-linked kinase-associated serine/threonine phosphatase 2C (370 aa).

N-acetylmethionine is present on M1. A disordered region spans residues M1–E69. S13 carries the post-translational modification Phosphoserine. Over residues S33–S45 the composition is skewed to low complexity. The segment covering E46–E69 has biased composition (basic and acidic residues). In terms of domain architecture, PPM-type phosphatase spans K86–I368. Positions 130 and 131 each coordinate Mn(2+). K188 carries the N6-acetyllysine modification. The Mn(2+) site is built by D304 and D359.

This sequence belongs to the PP2C family. In terms of assembly, interacts with ILK. Mg(2+) serves as cofactor. The cofactor is Mn(2+).

It localises to the cytoplasm. It carries out the reaction O-phospho-L-seryl-[protein] + H2O = L-seryl-[protein] + phosphate. The catalysed reaction is O-phospho-L-threonyl-[protein] + H2O = L-threonyl-[protein] + phosphate. In terms of biological role, protein phosphatase that may play a role in regulation of cell cycle progression via dephosphorylation of its substrates whose appropriate phosphorylation states might be crucial for cell proliferation. Selectively associates with integrin linked kinase (ILK), to modulate cell adhesion and growth factor signaling. Inhibits the ILK-GSK3B signaling axis and may play an important role in inhibiting oncogenic transformation. This chain is Integrin-linked kinase-associated serine/threonine phosphatase 2C (ILKAP), found in Bos taurus (Bovine).